The sequence spans 417 residues: Multifunctional CCA protein (417 aa).

Residues Gly-8 and Arg-11 each contribute to the ATP site. 2 residues coordinate CTP: Gly-8 and Arg-11. Asp-21 and Asp-23 together coordinate Mg(2+). Residues Arg-91, Arg-137, and Arg-140 each contribute to the ATP site. 3 residues coordinate CTP: Arg-91, Arg-137, and Arg-140. One can recognise an HD domain in the interval 225–326; sequence SGIHTLMTLQ…LNVLKKTDAF (102 aa).

The protein belongs to the tRNA nucleotidyltransferase/poly(A) polymerase family. Bacterial CCA-adding enzyme type 1 subfamily. Monomer. Can also form homodimers and oligomers. Mg(2+) serves as cofactor. It depends on Ni(2+) as a cofactor.

The catalysed reaction is a tRNA precursor + 2 CTP + ATP = a tRNA with a 3' CCA end + 3 diphosphate. The enzyme catalyses a tRNA with a 3' CCA end + 2 CTP + ATP = a tRNA with a 3' CCACCA end + 3 diphosphate. Functionally, catalyzes the addition and repair of the essential 3'-terminal CCA sequence in tRNAs without using a nucleic acid template. Adds these three nucleotides in the order of C, C, and A to the tRNA nucleotide-73, using CTP and ATP as substrates and producing inorganic pyrophosphate. tRNA 3'-terminal CCA addition is required both for tRNA processing and repair. Also involved in tRNA surveillance by mediating tandem CCA addition to generate a CCACCA at the 3' terminus of unstable tRNAs. While stable tRNAs receive only 3'-terminal CCA, unstable tRNAs are marked with CCACCA and rapidly degraded. This chain is Multifunctional CCA protein, found in Neisseria meningitidis serogroup A / serotype 4A (strain DSM 15465 / Z2491).